A 298-amino-acid chain; its full sequence is PYK10-binding protein 1 (298 aa).

N-acetylalanine is present on Ala2. Jacalin-type lectin domains are found at residues 2–142 (AQKV…YFAP) and 152–295 (AKQL…HVRP). The residue at position 20 (Ser20) is a Phosphoserine.

The protein belongs to the jacalin lectin family. As to quaternary structure, component of the PYK10 complex, at least composed of PYK10/BGLU23, BGLU21, BGLU22, JAL22, JAL23, PBP1/JAL30, PBP2/JAL31, JAL32, JAL33, JAL34, JAL35, GLL22 and GLL23. Expressed exclusively in roots.

The protein resides in the cytoplasm. Its function is as follows. Inhibitor-type lectin that may regulate the correct polymerization of BGLU23/PYK10 upon tissue damage. Activates BGLU21, BGLU22 and BGLU23. This Arabidopsis thaliana (Mouse-ear cress) protein is PYK10-binding protein 1 (PBP1).